Here is a 425-residue protein sequence, read N- to C-terminus: MIQTIRGFRDILPGETPLWQTIERAASQLFEDFGFQEIRLPLIERTELFARSIGEVTDIVEKEMYTFPDRKGENITLRPEATASVVRSYIQHKMYAADPIQKLYTMGPMFRRERPQKGRYRQFFQINAEVFGIASPYIDAQLILLLNELFKRLGLTDLTAHLNSLGCRECRPLFHRALTEFLVSKQDRLCSDCRRRMDKNPLRTLDCKVPGCREAMQDAPTTLDHLCSDCSDHFTTVKATLKAQGVDFLVDKTLVRGLDYYSRTAFEIQTTALGAQSAVAGGGRYDALIKELGGPEVPAIGFAIGLDRLAEVMAQLKGCPAPRGPDLFIIPLGPGAMEKAYLCSSRLNLVGIRSETDYNGKSLKSLMKRADKLNAGHALILDYRQPDKNAPVLRNMKTREQVTLGLEDPTDEVIKILTNEGTLRD.

The protein belongs to the class-II aminoacyl-tRNA synthetase family. Homodimer.

The protein resides in the cytoplasm. It carries out the reaction tRNA(His) + L-histidine + ATP = L-histidyl-tRNA(His) + AMP + diphosphate + H(+). The chain is Histidine--tRNA ligase from Desulforapulum autotrophicum (strain ATCC 43914 / DSM 3382 / VKM B-1955 / HRM2) (Desulfobacterium autotrophicum).